We begin with the raw amino-acid sequence, 381 residues long: Adaptive-response sensory kinase SasA (381 aa).

A Histidine kinase domain is found at 154 to 367 (MVAHELRTPL…CFYFTVPVWD (214 aa)). A Phosphohistidine; by autocatalysis modification is found at His157.

In terms of assembly, homooligomerizes. Interacts with KaiC. Participates in the KaiBC complex, whose core is composed of a KaiC homohexamer and 6 KaiB.

It carries out the reaction ATP + protein L-histidine = ADP + protein N-phospho-L-histidine.. In terms of biological role, member of the two-component regulatory system SasA/RpaA involved in genome-wide circadian gene expression. One of several clock output pathways. Participates in the Kai clock protein complex, the main circadian regulator in cyanobacteria, via its interaction with KaiC. KaiC enhances the autophosphorylation activity of SasA, which then transfers its phosphate group to RpaA to activate it. In addition to its output function, recruits fold-shifted KaiB (KaiB(fs)) to KaiC to cooperatively form the KaiB(6):KaiC(6) complex (independent of SasA kinase activity). Required for robustness of the circadian rhythm of gene expression and is involved in clock output, also required for adaptation to light/dark cycles. The polypeptide is Adaptive-response sensory kinase SasA (Prochlorococcus marinus (strain SARG / CCMP1375 / SS120)).